The chain runs to 140 residues: Small ribosomal subunit protein uS19 (140 aa).

The protein belongs to the universal ribosomal protein uS19 family.

Its function is as follows. Protein S19 forms a complex with S13 that binds strongly to the 16S ribosomal RNA. The polypeptide is Small ribosomal subunit protein uS19 (Metallosphaera sedula (strain ATCC 51363 / DSM 5348 / JCM 9185 / NBRC 15509 / TH2)).